Here is a 996-residue protein sequence, read N- to C-terminus: NACHT, LRR and PYD domains-containing protein 9 (996 aa).

Residues 1–94 (MAESFFSDFG…WRKARNEIRQ (94 aa)) enclose the Pyrin domain. An NACHT domain is found at 150 to 469 (PTVVLHGPEG…FYMFTRPKDP (320 aa)). 156–163 (GPEGIGKT) is an ATP binding site. 6 LRR repeats span residues 748–769 (KLNL…VLCE), 777–798 (ALEA…HLSQ), 805–825 (SLTF…TTLC), 834–855 (NLQE…DIAT), 862–883 (KLKT…QLCK), and 891–914 (KLEN…ASAL).

Belongs to the NLRP family. Sensor component of NLRP9 inflammasomes. Inflammasomes are supramolecular complexes that assemble in the cytosol in response to pathogens, such as rotavirus, and play critical roles in innate immunity and inflammation. The core of NLRP9 inflammasomes consists of a signal sensor component (NLRP9), an adapter (ASC/PYCARD), which recruits an effector pro-inflammatory caspase (CASP1). Within the complex, NLRP9 and PYCARD interact via their respective DAPIN/pyrin domains. This interaction initiates speck formation (nucleation) which greatly enhances further addition of soluble PYCARD molecules to the speck in a prion-like polymerization process. Clustered PYCARD nucleates the formation of CASP1 filaments through the interaction of their respective CARD domains, acting as a platform for CASP1 polymerization. CASP1 filament formation increases local enzyme concentration, resulting in trans-autocleavage and activation. Active CASP1 then processes IL1B and IL18 precursors, leading to the release of mature cytokines in the extracellular milieu and inflammatory response. Interacts with DHX9 upon rotavirus infection; this interaction may trigger inflammasome activation and inflammatory response. As to expression, detected exclusively in testis and ovary, and at high level in the oocyte from antral follicles.

The protein localises to the cytoplasm. Its subcellular location is the inflammasome. In terms of biological role, as the sensor component of the NLRP9 inflammasome, plays a crucial role in innate immunity and inflammation. In response to pathogens, including rotavirus, initiates the formation of the inflammasome polymeric complex, made of NLRP9, PYCARD and CASP1. Recruitment of proCASP1 to the inflammasome promotes its activation and CASP1-catalyzed IL1B and IL18 maturation and release in the extracellular milieu. The active cytokines stimulate inflammatory responses. Inflammasomes can also induce pyroptosis, an inflammatory form of programmed cell death. NLRP9 inflammasome activation may be initiated by DHX9 interaction with viral double-stranded RNA (dsRNA), preferentially to short dsRNA segments. The chain is NACHT, LRR and PYD domains-containing protein 9 (NLRP9) from Bos taurus (Bovine).